A 394-amino-acid chain; its full sequence is Elongation factor Tu 1 (394 aa).

One can recognise a tr-type G domain in the interval lysine 10–glutamate 204. The G1 stretch occupies residues glycine 19–threonine 26. Residue glycine 19–threonine 26 coordinates GTP. Threonine 26 provides a ligand contact to Mg(2+). The tract at residues glycine 60–serine 64 is G2. The tract at residues aspartate 81–glycine 84 is G3. GTP-binding positions include aspartate 81–histidine 85 and asparagine 136–aspartate 139. Residues asparagine 136–aspartate 139 are G4. The tract at residues serine 174 to leucine 176 is G5.

Belongs to the TRAFAC class translation factor GTPase superfamily. Classic translation factor GTPase family. EF-Tu/EF-1A subfamily. Monomer.

The protein localises to the cytoplasm. It catalyses the reaction GTP + H2O = GDP + phosphate + H(+). Its function is as follows. GTP hydrolase that promotes the GTP-dependent binding of aminoacyl-tRNA to the A-site of ribosomes during protein biosynthesis. This is Elongation factor Tu 1 from Vibrio vulnificus (strain YJ016).